The sequence spans 327 residues: Glycerol-3-phosphate dehydrogenase [NAD(P)+] (327 aa).

Positions 11, 30, and 103 each coordinate NADPH. K103, G131, and S133 together coordinate sn-glycerol 3-phosphate. NADPH is bound at residue A135. Residues K186, D243, S253, R254, and N255 each coordinate sn-glycerol 3-phosphate. Catalysis depends on K186, which acts as the Proton acceptor. R254 is a binding site for NADPH. NADPH is bound by residues V281 and E283.

It belongs to the NAD-dependent glycerol-3-phosphate dehydrogenase family.

The protein localises to the cytoplasm. It catalyses the reaction sn-glycerol 3-phosphate + NAD(+) = dihydroxyacetone phosphate + NADH + H(+). It carries out the reaction sn-glycerol 3-phosphate + NADP(+) = dihydroxyacetone phosphate + NADPH + H(+). The protein operates within membrane lipid metabolism; glycerophospholipid metabolism. Its function is as follows. Catalyzes the reduction of the glycolytic intermediate dihydroxyacetone phosphate (DHAP) to sn-glycerol 3-phosphate (G3P), the key precursor for phospholipid synthesis. This Wolbachia sp. subsp. Brugia malayi (strain TRS) protein is Glycerol-3-phosphate dehydrogenase [NAD(P)+].